Consider the following 485-residue polypeptide: MGGRSGDLLDRRTSRRGFTCVLEFSDSDTNVDPVSVLMGNESAFIGKINNDDFKKMCSRMNWNEDRGTAYIESVVGAPFYDLSDPVVVSHTRANKLITSPVSYNELVVWTQGKIRDSETDKLLGPTATNEALKTLLGSEVSANIIWKANSLEYSVPKLTALYAKGDRSIPHIFWTKQTLEFNSPQCHEWSAMDEISKNDPLDPLVMWPYLEEDEERTLKDLHTEIRIWYSLRTGRNPVKQTVSAAPSKSTLEYVPWVTRNMSYRSLPVQISYQSSHGLLWRGNRPQLYSSTLFGDNTVELTPYDMSQPYVNNDPFVEMIPFNREIHNDYDFCWKQLNDEYFMRKLPAQGEDSSNMFVVGDSTFFLGMGSVAIAWATTLGAGAGIHQRKIRQVVARRYKTDDVSGHALSALLMHSSHFYWYLYEIYLNHKSSKSVYAFPFREQKSGRYHSISEYKGALDAALQLNLPDFAIKRLGQFTKFLKKLDL.

This is Putative non-structural protein 1 (S7) from Micromonas pusilla (Picoplanktonic green alga).